The primary structure comprises 124 residues: Large ribosomal subunit protein uL29 (124 aa).

It belongs to the universal ribosomal protein uL29 family.

The chain is Large ribosomal subunit protein uL29 (RPL35) from Triticum aestivum (Wheat).